A 200-amino-acid chain; its full sequence is MQLNVNGAQAIEVSDATFGGEFNETLVHQAVVAYMAGGRQGTKGQKSRSDVSGGGKRPWRQKGTGRARAGTTRGPIWRGGGVTFAASTRNHDQKLNKKMYRAALRSILAELVRTDRLVVVEDFAVEAPKTKALLSKLNGLGLNDVLIVSDAVDQNLYLAARNLPHVDVRDVQGSDPVSLIAYEKVLVTVSAVKKFEELLG.

The tract at residues 38–73 is disordered; that stretch reads GRQGTKGQKSRSDVSGGGKRPWRQKGTGRARAGTTR.

It belongs to the universal ribosomal protein uL4 family. Part of the 50S ribosomal subunit.

Functionally, one of the primary rRNA binding proteins, this protein initially binds near the 5'-end of the 23S rRNA. It is important during the early stages of 50S assembly. It makes multiple contacts with different domains of the 23S rRNA in the assembled 50S subunit and ribosome. Forms part of the polypeptide exit tunnel. The protein is Large ribosomal subunit protein uL4 of Ectopseudomonas mendocina (strain ymp) (Pseudomonas mendocina).